The following is a 329-amino-acid chain: 4-methyl-2-oxopentanoate reductase A (329 aa).

NAD(+) is bound by residues 162–163 (GI), 240–242 (TAR), and Asp-266. Arg-242 is an active-site residue. The active site involves Glu-271. Residue His-289 is the Proton donor of the active site.

This sequence belongs to the D-isomer specific 2-hydroxyacid dehydrogenase family.

It carries out the reaction (2R)-hydroxy-4-methylpentanoate + NADP(+) = 4-methyl-2-oxopentanoate + NADPH + H(+). The catalysed reaction is a (2R)-2-hydroxycarboxylate + NADP(+) = a 2-oxocarboxylate + NADPH + H(+). In terms of biological role, 4-methyl-2-oxopentanoate (MOA) reductase that reduces MOA, a possible intermediate in leucine synthesis, to D-leucate in a NADPH- or NADH-dependent manner, but with a preference for NADPH. In addition to MOA, shows broad substrate specificity toward 2-keto acids. The chain is 4-methyl-2-oxopentanoate reductase A from Aspergillus oryzae (strain ATCC 42149 / RIB 40) (Yellow koji mold).